We begin with the raw amino-acid sequence, 251 residues long: MVKSHKRTLEKDEEHQEKKKANKISKDDMEIDAELLTQQASDSAHTDTATAAVAAVNNEQGKELEQTESSTNQTSALDKDDKETKDNLNPREETQSSHQEIDIPKDQLTNQQNLADQHQQYQYHQQLAQTNFKTEPTNSAKPPHGSEEWHRQRRENHKEVERKRRESINTGIRELARLIPTTDTNKAQILQRAVEYIKRLKENENNNIEKWTLEKLLTEQAVSELSASNEKLKHELESAYREIEQLKRGKK.

Residues 1–169 (MVKSHKRTLE…VERKRRESIN (169 aa)) are disordered. Residues 7–28 (RTLEKDEEHQEKKKANKISKDD) are compositionally biased toward basic and acidic residues. Residues 40-56 (ASDSAHTDTATAAVAAV) are compositionally biased toward low complexity. A compositionally biased stretch (polar residues) spans 67–76 (TESSTNQTSA). The segment covering 77 to 105 (LDKDDKETKDNLNPREETQSSHQEIDIPK) has biased composition (basic and acidic residues). The segment covering 107–116 (QLTNQQNLAD) has biased composition (polar residues). Residues 117–126 (QHQQYQYHQQ) show a composition bias toward low complexity. A compositionally biased stretch (polar residues) spans 127-140 (LAQTNFKTEPTNSA). Basic and acidic residues predominate over residues 144–167 (HGSEEWHRQRRENHKEVERKRRES). In terms of domain architecture, bHLH spans 152–200 (QRRENHKEVERKRRESINTGIRELARLIPTTDTNKAQILQRAVEYIKRL). The stretch at 190 to 223 (LQRAVEYIKRLKENENNNIEKWTLEKLLTEQAVS) forms a coiled coil.

Its subcellular location is the nucleus. Its function is as follows. Transcription factor that binds ribosomal protein gene promoters and rDNA locus with TBF1. Necessary for the expression of genes involved in assimilation of inorganic sulfate. Also required for the expression of respiratory genes and glycolytic genes. Does not bind to centromeres and is not necessary for efficient chromosome segregationas as does S.cerevisiae CBF1. This is Transcriptional regulator CBF1 (CBF1) from Candida albicans (strain SC5314 / ATCC MYA-2876) (Yeast).